The primary structure comprises 159 residues: 2-C-methyl-D-erythritol 2,4-cyclodiphosphate synthase (159 aa).

The a divalent metal cation site is built by Asp-8 and His-10. Residues Asp-8–His-10 and His-34–Ser-35 contribute to the 4-CDP-2-C-methyl-D-erythritol 2-phosphate site. An a divalent metal cation-binding site is contributed by His-42. Residues Asp-56 to Gly-58, Phe-61 to Asp-65, Ala-100 to Leu-106, Thr-132 to Glu-135, Phe-139, and Arg-142 each bind 4-CDP-2-C-methyl-D-erythritol 2-phosphate.

The protein belongs to the IspF family. As to quaternary structure, homotrimer. A divalent metal cation serves as cofactor.

The catalysed reaction is 4-CDP-2-C-methyl-D-erythritol 2-phosphate = 2-C-methyl-D-erythritol 2,4-cyclic diphosphate + CMP. It functions in the pathway isoprenoid biosynthesis; isopentenyl diphosphate biosynthesis via DXP pathway; isopentenyl diphosphate from 1-deoxy-D-xylulose 5-phosphate: step 4/6. In terms of biological role, involved in the biosynthesis of isopentenyl diphosphate (IPP) and dimethylallyl diphosphate (DMAPP), two major building blocks of isoprenoid compounds. Catalyzes the conversion of 4-diphosphocytidyl-2-C-methyl-D-erythritol 2-phosphate (CDP-ME2P) to 2-C-methyl-D-erythritol 2,4-cyclodiphosphate (ME-CPP) with a corresponding release of cytidine 5-monophosphate (CMP). This chain is 2-C-methyl-D-erythritol 2,4-cyclodiphosphate synthase, found in Escherichia coli O81 (strain ED1a).